Here is a 258-residue protein sequence, read N- to C-terminus: Proteasome subunit alpha type-3 (258 aa).

Residues Lys100, Lys199, and Lys231 each participate in a glycyl lysine isopeptide (Lys-Gly) (interchain with G-Cter in ubiquitin) cross-link.

It belongs to the peptidase T1A family. In terms of assembly, the 26S proteasome consists of a 20S proteasome core and two 19S regulatory subunits. The 20S proteasome core is composed of 28 subunits that are arranged in four stacked rings, resulting in a barrel-shaped structure. The two end rings are each formed by seven alpha subunits, and the two central rings are each formed by seven beta subunits. The catalytic chamber with the active sites is on the inside of the barrel.

The protein localises to the cytoplasm. Its subcellular location is the nucleus. In terms of biological role, the proteasome degrades poly-ubiquitinated proteins in the cytoplasm and in the nucleus. It is essential for the regulated turnover of proteins and for the removal of misfolded proteins. The proteasome is a multicatalytic proteinase complex that is characterized by its ability to cleave peptides with Arg, Phe, Tyr, Leu, and Glu adjacent to the leaving group at neutral or slightly basic pH. It has an ATP-dependent proteolytic activity. This chain is Proteasome subunit alpha type-3 (PRE9), found in Saccharomyces cerevisiae (strain ATCC 204508 / S288c) (Baker's yeast).